The sequence spans 300 residues: Putative S-adenosyl-L-methionine-dependent methyltransferase Mkms_0379 (300 aa).

S-adenosyl-L-methionine contacts are provided by residues Asp-128 and 157 to 158 (DL).

The protein belongs to the UPF0677 family.

Functionally, exhibits S-adenosyl-L-methionine-dependent methyltransferase activity. The sequence is that of Putative S-adenosyl-L-methionine-dependent methyltransferase Mkms_0379 from Mycobacterium sp. (strain KMS).